The following is a 326-amino-acid chain: Cyclin-dependent kinase 1 (326 aa).

In terms of domain architecture, Protein kinase spans 16–306 (FTKLEKIGEG…SKKALHHPYF (291 aa)). ATP contacts are provided by residues 22-30 (IGEGTYGVV) and lysine 45. Residue aspartate 140 is the Proton acceptor of the active site.

This sequence belongs to the protein kinase superfamily. CMGC Ser/Thr protein kinase family. CDC2/CDKX subfamily. As to quaternary structure, forms a stable but non-covalent complex with a regulatory subunit and with a cyclin. Interacts with cks-1.

The protein resides in the nucleus. It is found in the cytoplasm. Its subcellular location is the cytoskeleton. The protein localises to the microtubule organizing center. It localises to the centrosome. It carries out the reaction L-seryl-[protein] + ATP = O-phospho-L-seryl-[protein] + ADP + H(+). The catalysed reaction is L-threonyl-[protein] + ATP = O-phospho-L-threonyl-[protein] + ADP + H(+). The enzyme catalyses [DNA-directed RNA polymerase] + ATP = phospho-[DNA-directed RNA polymerase] + ADP + H(+). Its activity is regulated as follows. Phosphorylation both activates and inactivates the enzyme depending on the site of phosphorylation. In terms of biological role, plays a key role in the control of the eukaryotic cell cycle. Required for entry into S-phase and mitosis. Acts as a component of the kinase complex that phosphorylates the repetitive C-terminus of RNA polymerase II. May function in concert with npp-16 to arrest prophase blastomeres in response to anoxia. The sequence is that of Cyclin-dependent kinase 1 from Caenorhabditis briggsae.